Here is an 800-residue protein sequence, read N- to C-terminus: Heterogeneous nuclear ribonucleoprotein U (800 aa).

Residue serine 2 is modified to N-acetylserine. Residue serine 4 is modified to Phosphoserine. The 35-residue stretch at 8–42 (VKKLKVSELKEELKKRRLSDKGLKADLMDRLQAAL) folds into the SAP domain. 2 positions are modified to N6-acetyllysine: lysine 17 and lysine 21. The tract at residues 41-257 (ALDNEAGGRP…PQPPVEEEDE (217 aa)) is disordered. Phosphoserine is present on serine 58. Composition is skewed to low complexity over residues 71–80 (AGLEQEAAAG) and 103–113 (ENGAAGAADAG). Acidic residues-rich tracts occupy residues 114-128 (AMEEEEAASEDENGD) and 134-147 (EGEDELGDEEEGAG). The segment covering 153–173 (GEQQSQPPAAAAQQQPSQQRG) has biased composition (low complexity). Lysine 181 bears the N6-acetyllysine mark. An ADP-ribosylserine modification is found at serine 182. Residues 194–205 (APPGARQGQQQA) show a composition bias toward low complexity. Residues 209-242 (GKTEQKGGDKKRGVKRPREDHGRGYFEYIEENKY) are compositionally biased toward basic and acidic residues. Arginine 231 is subject to Citrulline. Position 241 is an N6-acetyllysine; alternate (lysine 241). Residue lysine 241 forms a Glycyl lysine isopeptide (Lys-Gly) (interchain with G-Cter in SUMO1); alternate linkage. A Glycyl lysine isopeptide (Lys-Gly) (interchain with G-Cter in SUMO2); alternate cross-link involves residue lysine 241. A Phosphotyrosine modification is found at tyrosine 242. Phosphoserine occurs at positions 243 and 247. Residues 244-440 (RAKSPQPPVE…VEFNFGQKEK (197 aa)) enclose the B30.2/SPRY domain. The residue at position 262 (threonine 262) is a Phosphothreonine. The residue at position 328 (lysine 328) is an N6-acetyllysine. An ATPase domain region spans residues 464 to 648 (PKGPEEKKDC…QKLLEQYKEE (185 aa)). Lysine 471 participates in a covalent cross-link: Glycyl lysine isopeptide (Lys-Gly) (interchain with G-Cter in SUMO2). 480-487 (GLPGAGKT) is an ATP binding site. N6-acetyllysine; alternate occurs at positions 492 and 500. Residues lysine 492 and lysine 500 each participate in a glycyl lysine isopeptide (Lys-Gly) (interchain with G-Cter in SUMO2); alternate cross-link. Threonine 508 is modified (phosphothreonine). A Glycyl lysine isopeptide (Lys-Gly) (interchain with G-Cter in SUMO2) cross-link involves residue lysine 512. An N6-acetyllysine modification is found at lysine 527. Position 541 is an N6-acetyllysine; alternate (lysine 541). A Glycyl lysine isopeptide (Lys-Gly) (interchain with G-Cter in SUMO2); alternate cross-link involves residue lysine 541. A Glycyl lysine isopeptide (Lys-Gly) (interchain with G-Cter in SUMO2) cross-link involves residue lysine 550. Threonine 558 carries the phosphothreonine modification. Residues lysine 585 and lysine 602 each participate in a glycyl lysine isopeptide (Lys-Gly) (interchain with G-Cter in SUMO2) cross-link. The tract at residues 587–602 (EDYKQRTQKKAEVEGK) is actin-binding. Position 611 is an N6-acetyllysine; alternate (lysine 611). Lysine 611 is covalently cross-linked (Glycyl lysine isopeptide (Lys-Gly) (interchain with G-Cter in SUMO2); alternate). The stretch at 626 to 653 (DEITYVELQKEEAQKLLEQYKEESKKAL) forms a coiled coil. Glycyl lysine isopeptide (Lys-Gly) (interchain with G-Cter in SUMO2) cross-links involve residues lysine 640 and lysine 646. Residues 647–659 (EESKKALPPEKKQ) are compositionally biased toward basic and acidic residues. Positions 647 to 729 (EESKKALPPE…GSGGIGYPYP (83 aa)) are disordered. An Omega-N-methylarginine modification is found at arginine 678. Residues 686-704 (GGFNMRGGNFRGGAPGNRG) show a composition bias toward gly residues. The segment at 690–715 (MRGGNFRGGAPGNRGGYNRRGNMPQR) is RNA-binding RGG-box. 3 positions are modified to asymmetric dimethylarginine: arginine 691, arginine 696, and arginine 703. Asymmetric dimethylarginine; alternate is present on residues arginine 709 and arginine 715. 2 positions are modified to omega-N-methylarginine; alternate: arginine 709 and arginine 715. Positions 715–725 (RGGGGGSGGIG) are enriched in gly residues. Arginine 730 and arginine 737 each carry asymmetric dimethylarginine. The interval 745–774 (NYNRGGMPNRGNYNQNFRGRGNNRGYKNQS) is disordered. Lysine 789 is modified (N6-acetyllysine; alternate). Residue lysine 789 forms a Glycyl lysine isopeptide (Lys-Gly) (interchain with G-Cter in SUMO2); alternate linkage.

In terms of assembly, oligomer (via ATPase domain and RNA-binding RGG-box region); oligomerization occurs upon ATP-binding in a chromatin-associated RNAs (caRNAs)- and transcription-dependent manner and is required for chromatin decompaction. ATP hydrolysis is required to cycle from an oligomeric to monomeric state to compact chromatin. Component of the coding region determinant (CRD)-mediated complex, composed of DHX9, HNRNPU, IGF2BP1, SYNCRIP and YBX1. Identified in the spliceosome C complex. Identified in a IGF2BP1-dependent mRNP granule complex containing untranslated mRNAs. Associates with heterogeneous nuclear ribonucleoprotein (hnRNP) particles. Associates (via middle region) with the C-terminal domain (CTD) RNA polymerase II (Pol II) holoenzyme; this association occurs in a RNA-independent manner. Associates (via middle region) with the core-TFIIH basal transcription factor complex; this association inhibits the CTD phosphorylation of RNA polymerase II holoenzyme by down-regulating TFIIH kinase activity. Associates with the telomerase holoenzyme complex. Associates with spindle microtubules (MTs) in a TPX2-dependent manner. Interacts (via C-terminus) with actin; this interaction is direct and mediates association with the phosphorylated CTD of RNA polymerase II and is disrupted in presence of the long non-coding H19 RNA. Interacts with AURKA. Interacts (via C-terminus) with CBX5; this interaction is, at least in part, RNA-dependent. Interacts with CR2. Interacts with CRY1. Interacts (via C-terminus) with EP300; this interaction enhances DNA-binding to nuclear scaffold/matrix attachment region (S/MAR) elements. Interacts with ERBB4. Interacts with GEMIN5. Interacts with IGF2BP1. Interacts with IGF2BP2 and IGF2BP3. Interacts with NCL; this interaction occurs during mitosis. Interacts (via C-terminus) with NR3C1 (via C-terminus). Interacts with PLK1; this interaction induces phosphorylation of HNRNPU at Ser-58 in mitosis. Interacts with POU3F4. Interacts with SMARCA4; this interaction occurs in embryonic stem cells and stimulates global Pol II-mediated transcription. Interacts (via C-terminus) with TOP2A; this interaction protects the topoisomerase TOP2A from degradation and positively regulates the relaxation of supercoiled DNA by TOP2A in a RNA-dependent manner. Interacts with TPX2; this interaction recruits HNRNPU to spindle microtubules (MTs). Interacts with UBQLN2. Interacts (via RNA-binding RGG-box region) with ZBTB7B; the interaction facilitates the recruitment of long non-coding RNA Blnc1 by ZBTB7B. Interacts with ERCC6. In terms of processing, cleaved at Asp-94 by CASP3 during T-cell apoptosis, resulting in a loss of DNA- and chromatin-binding activities. Extensively phosphorylated. Phosphorylated on Ser-58 by PLK1 and dephosphorylated by protein phosphatase 2A (PP2A) in mitosis. Post-translationally, arg-709 and Arg-715 are dimethylated, probably to asymmetric dimethylarginine. In terms of processing, citrullinated by PADI4.

Its subcellular location is the nucleus. It is found in the nucleus matrix. The protein localises to the chromosome. It localises to the nucleus speckle. The protein resides in the cytoplasm. Its subcellular location is the cytoskeleton. It is found in the microtubule organizing center. The protein localises to the centrosome. It localises to the centromere. The protein resides in the kinetochore. Its subcellular location is the spindle. It is found in the spindle pole. The protein localises to the midbody. It localises to the cell surface. The protein resides in the cytoplasmic granule. In terms of biological role, DNA- and RNA-binding protein involved in several cellular processes such as nuclear chromatin organization, telomere-length regulation, transcription, mRNA alternative splicing and stability, Xist-mediated transcriptional silencing and mitotic cell progression. Plays a role in the regulation of interphase large-scale gene-rich chromatin organization through chromatin-associated RNAs (caRNAs) in a transcription-dependent manner, and thereby maintains genomic stability. Required for the localization of the long non-coding Xist RNA on the inactive chromosome X (Xi) and the subsequent initiation and maintenance of X-linked transcriptional gene silencing during X-inactivation. Plays a role as a RNA polymerase II (Pol II) holoenzyme transcription regulator. Promotes transcription initiation by direct association with the core-TFIIH basal transcription factor complex for the assembly of a functional pre-initiation complex with Pol II in a actin-dependent manner. Blocks Pol II transcription elongation activity by inhibiting the C-terminal domain (CTD) phosphorylation of Pol II and dissociates from Pol II pre-initiation complex prior to productive transcription elongation. Positively regulates CBX5-induced transcriptional gene silencing and retention of CBX5 in the nucleus. Negatively regulates glucocorticoid-mediated transcriptional activation. Key regulator of transcription initiation and elongation in embryonic stem cells upon leukemia inhibitory factor (LIF) signaling. Involved in the long non-coding RNA H19-mediated Pol II transcriptional repression. Participates in the circadian regulation of the core clock component BMAL1 transcription. Plays a role in the regulation of telomere length. Plays a role as a global pre-mRNA alternative splicing modulator by regulating U2 small nuclear ribonucleoprotein (snRNP) biogenesis. Plays a role in mRNA stability. Component of the CRD-mediated complex that promotes MYC mRNA stabilization. Enhances the expression of specific genes, such as tumor necrosis factor TNFA, by regulating mRNA stability, possibly through binding to the 3'-untranslated region (UTR). Plays a role in mitotic cell cycle regulation. Involved in the formation of stable mitotic spindle microtubules (MTs) attachment to kinetochore, spindle organization and chromosome congression. Phosphorylation at Ser-58 by PLK1 is required for chromosome alignement and segregation and progression through mitosis. Also contributes to the targeting of AURKA to mitotic spindle MTs. Binds to double- and single-stranded DNA and RNA, poly(A), poly(C) and poly(G) oligoribonucleotides. Binds to chromatin-associated RNAs (caRNAs). Associates with chromatin to scaffold/matrix attachment region (S/MAR) elements in a chromatin-associated RNAs (caRNAs)-dependent manner. Binds (via RNA-binding RGG-box region) to the long non-coding Xist RNA; this binding is direct and bridges the Xist RNA and the inactive chromosome X (Xi). Binds the long non-coding H19 RNA. Binds to SMN1/2 pre-mRNAs at G/U-rich regions. Binds to small nuclear RNAs (snRNAs). Binds to the 3'-UTR of TNFA mRNA. Also negatively regulates embryonic stem cell differentiation upon LIF signaling. Required for embryonic development. Binds to brown fat long non-coding RNA 1 (Blnc1); facilitates the recruitment of Blnc1 by ZBTB7B required to drive brown and beige fat development and thermogenesis. The chain is Heterogeneous nuclear ribonucleoprotein U from Mus musculus (Mouse).